Reading from the N-terminus, the 101-residue chain is Phosphoribosyl-AMP cyclohydrolase (101 aa).

Residue aspartate 71 participates in Mg(2+) binding. Cysteine 72 lines the Zn(2+) pocket. 2 residues coordinate Mg(2+): aspartate 73 and aspartate 75. Zn(2+) is bound by residues cysteine 88 and cysteine 95.

It belongs to the PRA-CH family. In terms of assembly, homodimer. The cofactor is Mg(2+). Zn(2+) is required as a cofactor.

It is found in the cytoplasm. The catalysed reaction is 1-(5-phospho-beta-D-ribosyl)-5'-AMP + H2O = 1-(5-phospho-beta-D-ribosyl)-5-[(5-phospho-beta-D-ribosylamino)methylideneamino]imidazole-4-carboxamide. Its pathway is amino-acid biosynthesis; L-histidine biosynthesis; L-histidine from 5-phospho-alpha-D-ribose 1-diphosphate: step 3/9. Catalyzes the hydrolysis of the adenine ring of phosphoribosyl-AMP. The chain is Phosphoribosyl-AMP cyclohydrolase from Bacillus cereus (strain 03BB102).